We begin with the raw amino-acid sequence, 713 residues long: Glutamine-dependent NAD(+) synthetase (713 aa).

A CN hydrolase domain is found at 4-275 (VTLATCNLNQ…IEVITATVDL (272 aa)). E44 functions as the Proton acceptor; for glutaminase activity in the catalytic mechanism. K114 serves as the catalytic For glutaminase activity. Residue C175 is the Nucleophile; for glutaminase activity of the active site. The interval 324–703 (YNTPAEEIGF…QRPQLKNTVN (380 aa)) is ligase. 354–361 (PLSGGADS) is an ATP binding site. S356 is an active-site residue.

This sequence in the C-terminal section; belongs to the NAD synthetase family.

It catalyses the reaction deamido-NAD(+) + L-glutamine + ATP + H2O = L-glutamate + AMP + diphosphate + NAD(+) + H(+). The protein operates within cofactor biosynthesis; NAD(+) biosynthesis; NAD(+) from deamido-NAD(+) (L-Gln route): step 1/1. This chain is Glutamine-dependent NAD(+) synthetase (nadsyn1), found in Dictyostelium discoideum (Social amoeba).